The sequence spans 1070 residues: DNA-directed RNA polymerase subunit beta (1070 aa).

Belongs to the RNA polymerase beta chain family. As to quaternary structure, in plastids the minimal PEP RNA polymerase catalytic core is composed of four subunits: alpha, beta, beta', and beta''. When a (nuclear-encoded) sigma factor is associated with the core the holoenzyme is formed, which can initiate transcription.

The protein localises to the plastid. The protein resides in the chloroplast. The catalysed reaction is RNA(n) + a ribonucleoside 5'-triphosphate = RNA(n+1) + diphosphate. DNA-dependent RNA polymerase catalyzes the transcription of DNA into RNA using the four ribonucleoside triphosphates as substrates. This Angiopteris evecta (Mule's foot fern) protein is DNA-directed RNA polymerase subunit beta.